The sequence spans 147 residues: Cyanate hydratase (147 aa).

Residues arginine 88, glutamate 91, and serine 114 contribute to the active site.

Belongs to the cyanase family.

The catalysed reaction is cyanate + hydrogencarbonate + 3 H(+) = NH4(+) + 2 CO2. Functionally, catalyzes the reaction of cyanate with bicarbonate to produce ammonia and carbon dioxide. The chain is Cyanate hydratase from Methylobacillus flagellatus (strain ATCC 51484 / DSM 6875 / VKM B-1610 / KT).